Consider the following 106-residue polypeptide: Large ribosomal subunit protein uL23 (106 aa).

The protein belongs to the universal ribosomal protein uL23 family. As to quaternary structure, part of the 50S ribosomal subunit. Contacts protein L29, and trigger factor when it is bound to the ribosome.

Its function is as follows. One of the early assembly proteins it binds 23S rRNA. One of the proteins that surrounds the polypeptide exit tunnel on the outside of the ribosome. Forms the main docking site for trigger factor binding to the ribosome. This chain is Large ribosomal subunit protein uL23, found in Neisseria meningitidis serogroup A / serotype 4A (strain DSM 15465 / Z2491).